We begin with the raw amino-acid sequence, 435 residues long: Trigger factor (435 aa).

A PPIase FKBP-type domain is found at 163-248 (DDITLIDFTG…INEIKRKELA (86 aa)).

This sequence belongs to the FKBP-type PPIase family. Tig subfamily.

The protein localises to the cytoplasm. The enzyme catalyses [protein]-peptidylproline (omega=180) = [protein]-peptidylproline (omega=0). Its function is as follows. Involved in protein export. Acts as a chaperone by maintaining the newly synthesized protein in an open conformation. Functions as a peptidyl-prolyl cis-trans isomerase. This is Trigger factor from Desulforamulus reducens (strain ATCC BAA-1160 / DSM 100696 / MI-1) (Desulfotomaculum reducens).